The following is a 289-amino-acid chain: Rhodopsin (289 aa).

The Extracellular portion of the chain corresponds to 1-7 (YLVSPAG). The chain crosses the membrane as a helical span at residues 8 to 32 (YAALGAYMFLLILVGFPVNFLTLYV). Residues 33–44 (TLEHKKLRTPLN) are Cytoplasmic-facing. Residues 45–67 (YILLNLAVADLFMVLGGFTTTMY) form a helical membrane-spanning segment. The Extracellular segment spans residues 68–81 (TSMHGYFVLGRLGC). A disulfide bond links Cys-81 and Cys-158. A helical transmembrane segment spans residues 82–104 (NLEGFFVTLGGEIALWSLVVLAI). The 'Ionic lock' involved in activated form stabilization signature appears at 105-107 (ERW). Residues 105–123 (ERWIGVFKSIRNFRFTEDH) lie on the Cytoplasmic side of the membrane. Residues 124-144 (AIMGLGFSWVMAATCAVPPLV) traverse the membrane as a helical segment. The Extracellular portion of the chain corresponds to 145-173 (GWLRYIPEGMQCSCGVDYYTRAEGFNNES). Asn-171 carries an N-linked (GlcNAc...) asparagine glycan. Residues 174 to 195 (FVIYMFIVHFLIPLIVIFFCYG) traverse the membrane as a helical segment. Residues 196–223 (RLLCAVKEAAAAQQESETTQRAEKEVSR) are Cytoplasmic-facing. A helical membrane pass occupies residues 224-245 (MVVIMVIGYLVCWLPYASVAWW). Residues 246–257 (IFCNQGSEFGPI) are Extracellular-facing. The helical transmembrane segment at 258 to 279 (FMTLPAFFAKSPAIYNPLIYIC) threads the bilayer. At Lys-267 the chain carries N6-(retinylidene)lysine. At 280–289 (MNKQFPHCMI) the chain is on the cytoplasmic side.

Belongs to the G-protein coupled receptor 1 family. Opsin subfamily. Post-translationally, phosphorylated on some or all of the serine and threonine residues present in the C-terminal region. Contains one covalently linked retinal chromophore.

It is found in the membrane. Its subcellular location is the cell projection. It localises to the cilium. The protein resides in the photoreceptor outer segment. In terms of biological role, photoreceptor required for image-forming vision at low light intensity. While most salt water fish species use retinal as chromophore, most freshwater fish use 3-dehydroretinal, or a mixture of retinal and 3-dehydroretinal. Light-induced isomerization of 11-cis to all-trans retinal triggers a conformational change that activates signaling via G-proteins. Subsequent receptor phosphorylation mediates displacement of the bound G-protein alpha subunit by arrestin and terminates signaling. The chain is Rhodopsin (rho) from Leocottus kesslerii (Kessler's sculpin).